Here is a 123-residue protein sequence, read N- to C-terminus: UPF0231 protein PMI2039 (123 aa).

Belongs to the UPF0231 family.

The polypeptide is UPF0231 protein PMI2039 (Proteus mirabilis (strain HI4320)).